We begin with the raw amino-acid sequence, 137 residues long: Small ribosomal subunit protein uS12 (137 aa).

Residue aspartate 102 is modified to 3-methylthioaspartic acid.

The protein belongs to the universal ribosomal protein uS12 family. As to quaternary structure, part of the 30S ribosomal subunit. Contacts proteins S8 and S17. May interact with IF1 in the 30S initiation complex.

With S4 and S5 plays an important role in translational accuracy. Its function is as follows. Interacts with and stabilizes bases of the 16S rRNA that are involved in tRNA selection in the A site and with the mRNA backbone. Located at the interface of the 30S and 50S subunits, it traverses the body of the 30S subunit contacting proteins on the other side and probably holding the rRNA structure together. The combined cluster of proteins S8, S12 and S17 appears to hold together the shoulder and platform of the 30S subunit. The protein is Small ribosomal subunit protein uS12 of Mesoplasma florum (strain ATCC 33453 / NBRC 100688 / NCTC 11704 / L1) (Acholeplasma florum).